Reading from the N-terminus, the 674-residue chain is Putative kinase-like protein TMKL1 (674 aa).

The first 25 residues, 1 to 25 (MGMEALRFLHVIFFFVLILHCHCGT), serve as a signal peptide directing secretion. Over 26–295 (SLSGSSDVKL…PLKPCLGSSR (270 aa)) the chain is Extracellular. N-linked (GlcNAc...) asparagine glycans are attached at residues Asn57, Asn90, Asn95, and Asn110. LRR repeat units lie at residues 100–122 (HLLSLQLPSANLTGSLPREIGEF), 124–146 (MLQSVFLNINSLSGSIPLELGYT), 148–169 (SLSDVDLSGNALAGVLPPSIWN), and 173–194 (KLVSFKIHGNNLSGVLPEPALP). Asn183 and Asn195 each carry an N-linked (GlcNAc...) asparagine glycan. 3 LRR repeats span residues 200-222 (NLQVLDLGGNKFSGEFPEFITRF), 224-244 (GVKSLDLSSNVFEGLVPEGLG), and 247-269 (ELESLNLSHNNFSGMLPDFGESK). 2 N-linked (GlcNAc...) asparagine glycosylation sites follow: Asn252 and Asn257. The helical transmembrane segment at 296–323 (LSPGAVAGLVIGLMSGAVVVASLLIGYL) threads the bilayer. The Cytoplasmic segment spans residues 324–674 (QNKKRKSSIE…ETRSDAETPF (351 aa)). The tract at residues 331 to 350 (SIESEDDLEEGDEEDEIGEK) is disordered. Residues 333-348 (ESEDDLEEGDEEDEIG) are compositionally biased toward acidic residues. Ser334 carries the phosphoserine modification. The 302-residue stretch at 373-674 (NATGQVMEKT…ETRSDAETPF (302 aa)) folds into the Protein kinase domain. Thr375 carries the post-translational modification Phosphothreonine. Ser454 is modified (phosphoserine). A disordered region spans residues 649–674 (LEENRPRNRSALYSPTETRSDAETPF).

It belongs to the protein kinase superfamily.

The protein resides in the membrane. In terms of biological role, does not seem to have conserved a kinase activity. In Arabidopsis thaliana (Mouse-ear cress), this protein is Putative kinase-like protein TMKL1 (TMKL1).